We begin with the raw amino-acid sequence, 255 residues long: Small ribosomal subunit protein uS2 (255 aa).

The interval 230 to 255 (QGSSGRDLGASSEVPVEPALEEAAEG) is disordered.

It belongs to the universal ribosomal protein uS2 family.

This chain is Small ribosomal subunit protein uS2, found in Rhizobium johnstonii (strain DSM 114642 / LMG 32736 / 3841) (Rhizobium leguminosarum bv. viciae).